The primary structure comprises 192 residues: ATP synthase protein MI25 (192 aa).

Residues 29–49 traverse the membrane as a helical segment; sequence ISIYNEEMIVARCFIGFLIFS.

It belongs to the ATPase protein MI25 family. In terms of assembly, F-type ATPases have 2 components, CF(1) - the catalytic core - and CF(0) - the membrane proton channel. CF(1) has five subunits: alpha(3), beta(3), gamma(1), delta(1), epsilon(1). CF(0) has three main subunits: a, b and c.

It is found in the mitochondrion membrane. Functionally, this is one of the chains of the nonenzymatic component (CF(0) subunit) of the mitochondrial ATPase complex. This Triticum timopheevii (Timopheev's wheat) protein is ATP synthase protein MI25.